The chain runs to 46 residues: Major cold shock protein (46 aa).

The region spanning 1 to 46 (DKGFGFITPADGSKDVFVHFSAIQSNDFKTLDEGQKVEFSIENGAK) is the CSD domain.

Homodimer.

It localises to the cytoplasm. The chain is Major cold shock protein (cspA) from Yersinia enterocolitica.